Consider the following 200-residue polypeptide: Transgelin (200 aa).

The residue at position 2 (Ser-2) is an N-acetylserine. Phosphoserine is present on Ser-11. The 111-residue stretch at 26–136 folds into the Calponin-homology (CH) domain; that stretch reads PEAIQNIKIW…QTLKSLSRYA (111 aa). The interval 144-168 is disordered; it reads FPVLGPQLSTKKPRPPVKSKPKHLQ. The tract at residues 151 to 164 is interaction with SH3 domain of ABP1; the sequence is LSTKKPRPPVKSKP. The segment covering 154 to 165 has biased composition (basic residues); the sequence is KKPRPPVKSKPK.

As to quaternary structure, binds to actin. Interacts with ABP1.

Its subcellular location is the cytoplasm. It is found in the cytoskeleton. The protein resides in the actin patch. In terms of biological role, has actin-binding and actin-bundling activity. Stabilizes actin filaments against disassembly. The protein is Transgelin (SCP1) of Saccharomyces cerevisiae (strain ATCC 204508 / S288c) (Baker's yeast).